We begin with the raw amino-acid sequence, 181 residues long: MLRFKELYQQEIIENLQKEFSYKNKHAIPQIKKVVINMGVGEAIADSKVINNAVNDLTLISGQKPVVTLARKSIATFKLRENMKIGCKVTLRKDRMYDFLERLVIVALPRVKEFRGFSYKSFDGKGNFTFGLKEQIVFPEINYDKIDTIRGMDITIVTSAKTDKESKFLLSGFNFPFYNNF.

This sequence belongs to the universal ribosomal protein uL5 family. In terms of assembly, part of the 50S ribosomal subunit; part of the 5S rRNA/L5/L18/L25 subcomplex. Contacts the 5S rRNA and the P site tRNA. Forms a bridge to the 30S subunit in the 70S ribosome.

In terms of biological role, this is one of the proteins that bind and probably mediate the attachment of the 5S RNA into the large ribosomal subunit, where it forms part of the central protuberance. In the 70S ribosome it contacts protein S13 of the 30S subunit (bridge B1b), connecting the 2 subunits; this bridge is implicated in subunit movement. Contacts the P site tRNA; the 5S rRNA and some of its associated proteins might help stabilize positioning of ribosome-bound tRNAs. The polypeptide is Large ribosomal subunit protein uL5 (Rickettsia canadensis (strain McKiel)).